A 1413-amino-acid polypeptide reads, in one-letter code: DNA-directed RNA polymerase subunit beta' (1413 aa).

Cys70, Cys72, Cys85, and Cys88 together coordinate Zn(2+). Asp460, Asp462, and Asp464 together coordinate Mg(2+). Zn(2+)-binding residues include Cys819, Cys893, Cys900, and Cys903. The segment at 1393-1413 is disordered; the sequence is EAFEFGTPETPAAEQTPHTNE.

This sequence belongs to the RNA polymerase beta' chain family. In terms of assembly, the RNAP catalytic core consists of 2 alpha, 1 beta, 1 beta' and 1 omega subunit. When a sigma factor is associated with the core the holoenzyme is formed, which can initiate transcription. The cofactor is Mg(2+). Requires Zn(2+) as cofactor.

It catalyses the reaction RNA(n) + a ribonucleoside 5'-triphosphate = RNA(n+1) + diphosphate. DNA-dependent RNA polymerase catalyzes the transcription of DNA into RNA using the four ribonucleoside triphosphates as substrates. The sequence is that of DNA-directed RNA polymerase subunit beta' from Paraburkholderia phymatum (strain DSM 17167 / CIP 108236 / LMG 21445 / STM815) (Burkholderia phymatum).